A 486-amino-acid chain; its full sequence is Protein hold'em (486 aa).

Residues 166–285 (IITTNVNLLV…DCRLLLAFAA (120 aa)) constitute a DNA-binding region (OB).

This sequence belongs to the MEIOB family. Interacts with mei-9 and Ercc1.

In terms of biological role, single-stranded DNA-binding protein required for meiosis. May be involved in the resolution of recombination intermediates into crossovers in the meiotic recombination pathway. This chain is Protein hold'em (hdm), found in Drosophila melanogaster (Fruit fly).